We begin with the raw amino-acid sequence, 357 residues long: Glucose-6-phosphatase catalytic subunit 1 (357 aa).

Over 1-28 the chain is Lumenal; sequence MEEGMNILHDFGIQSTRYLQVNYQDSQD. Residues 29-49 traverse the membrane as a helical segment; it reads WFILVSVIADLRNAFYVLFPI. At 50–60 the chain is on the cytoplasmic side; that stretch reads WFHLKETVGIN. The helical transmembrane segment at 61-81 threads the bilayer; it reads LLWVAVVGDWFNLVFKWILFG. Over 82-117 the chain is Lumenal; the sequence is QRPYWWVLDTDYYSNSSVPIIKQFPVTCETGPGSPS. Position 83 (Arg83) interacts with substrate. Asn96 carries an N-linked (GlcNAc...) asparagine glycan. Residues 118 to 138 form a helical membrane-spanning segment; the sequence is GHAMGAAGVYYVMVTSTLAIF. His119 functions as the Proton donor in the catalytic mechanism. At 139 to 147 the chain is on the cytoplasmic side; that stretch reads RGKKKPTYG. Residues 148–168 form a helical membrane-spanning segment; that stretch reads FRCLNVILWLGFWAVQLNVCL. Residues 169–179 are Lumenal-facing; that stretch reads SRIYLAAHFPH. Residue Arg170 participates in substrate binding. His176 (nucleophile) is an active-site residue. The helical transmembrane segment at 180–202 threads the bilayer; the sequence is QVVAGVLSGIAVAETFSHIRGIY. The Cytoplasmic portion of the chain corresponds to 203–211; that stretch reads NASLRKYCL. Residues 212-232 form a helical membrane-spanning segment; sequence ITIFLFGFALGFYLLLKGLGV. At 233–254 the chain is on the lumenal side; the sequence is DLLWTLEKAKRWCERPEWVHLD. Residues 255–275 traverse the membrane as a helical segment; sequence TTPFASLFKNLGTLLGLGLAL. Over 276-291 the chain is Cytoplasmic; the sequence is NSSMYRKSCKGELSKL. A helical membrane pass occupies residues 292-312; the sequence is LPFRFACIVASLVLLHLFDSL. At 313–320 the chain is on the lumenal side; it reads KPPSQVEL. Residues 321–341 traverse the membrane as a helical segment; the sequence is IFYILSFCKSATVPFASVSLI. The Cytoplasmic portion of the chain corresponds to 342–357; the sequence is PYCLARILGQTHKKSL. Residues 354–357 carry the Prevents secretion from ER motif; it reads KKSL.

The protein belongs to the glucose-6-phosphatase family. As to expression, liver and kidney.

Its subcellular location is the endoplasmic reticulum membrane. It carries out the reaction D-glucose 6-phosphate + H2O = D-glucose + phosphate. Its pathway is carbohydrate biosynthesis; gluconeogenesis. In terms of biological role, hydrolyzes glucose-6-phosphate to glucose in the endoplasmic reticulum. Forms with the glucose-6-phosphate transporter (SLC37A4/G6PT) the complex responsible for glucose production in the terminal step of glycogenolysis and gluconeogenesis. Hence, it is the key enzyme in homeostatic regulation of blood glucose levels. The sequence is that of Glucose-6-phosphatase catalytic subunit 1 (G6pc1) from Mus musculus (Mouse).